The chain runs to 233 residues: Demethylmenaquinone methyltransferase (233 aa).

S-adenosyl-L-methionine contacts are provided by residues Thr58, Asp79, and 106–107 (NA).

It belongs to the class I-like SAM-binding methyltransferase superfamily. MenG/UbiE family.

It catalyses the reaction a 2-demethylmenaquinol + S-adenosyl-L-methionine = a menaquinol + S-adenosyl-L-homocysteine + H(+). Its pathway is quinol/quinone metabolism; menaquinone biosynthesis; menaquinol from 1,4-dihydroxy-2-naphthoate: step 2/2. Functionally, methyltransferase required for the conversion of demethylmenaquinol (DMKH2) to menaquinol (MKH2). This Bacillus subtilis (strain 168) protein is Demethylmenaquinone methyltransferase.